The chain runs to 150 residues: MEKRKDTKTTIAKASDAQNKSWYVIDATGKTLGRLSSEVAKILRGKHKVTYTPHIAMGDGVIVINAEKVHLTGAKKGQKIYRYYTGYISGMREIPFENMLAKKPSYIIEHAIKGMMPKTRLGKRQLKSLRILKGDCYKTFEAQKPILLDV.

This sequence belongs to the universal ribosomal protein uL13 family. Part of the 50S ribosomal subunit.

Functionally, this protein is one of the early assembly proteins of the 50S ribosomal subunit, although it is not seen to bind rRNA by itself. It is important during the early stages of 50S assembly. This chain is Large ribosomal subunit protein uL13, found in Chlamydia caviae (strain ATCC VR-813 / DSM 19441 / 03DC25 / GPIC) (Chlamydophila caviae).